The primary structure comprises 259 residues: 5'-nucleotidase SurE (259 aa).

4 residues coordinate a divalent metal cation: Asp-8, Asp-9, Ser-39, and Asn-95.

It belongs to the SurE nucleotidase family. Requires a divalent metal cation as cofactor.

It localises to the cytoplasm. The enzyme catalyses a ribonucleoside 5'-phosphate + H2O = a ribonucleoside + phosphate. Its function is as follows. Nucleotidase that shows phosphatase activity on nucleoside 5'-monophosphates. This is 5'-nucleotidase SurE from Pseudothermotoga lettingae (strain ATCC BAA-301 / DSM 14385 / NBRC 107922 / TMO) (Thermotoga lettingae).